A 103-amino-acid polypeptide reads, in one-letter code: Ig lambda chain C region (103 aa).

Positions 6–99 (PTITLFPPSK…NGTSITKTLK (94 aa)) constitute an Ig-like domain. C28 and C85 are joined by a disulfide.

This Gallus gallus (Chicken) protein is Ig lambda chain C region.